Consider the following 525-residue polypeptide: Light-independent protochlorophyllide reductase subunit B (525 aa).

Residue Asp-36 participates in [4Fe-4S] cluster binding. The active-site Proton donor is the Asp-286. 421–422 lines the substrate pocket; sequence GL.

This sequence belongs to the ChlB/BchB/BchZ family. As to quaternary structure, protochlorophyllide reductase is composed of three subunits; ChlL, ChlN and ChlB. Forms a heterotetramer of two ChlB and two ChlN subunits. The cofactor is [4Fe-4S] cluster.

The enzyme catalyses chlorophyllide a + oxidized 2[4Fe-4S]-[ferredoxin] + 2 ADP + 2 phosphate = protochlorophyllide a + reduced 2[4Fe-4S]-[ferredoxin] + 2 ATP + 2 H2O. It functions in the pathway porphyrin-containing compound metabolism; chlorophyll biosynthesis (light-independent). Functionally, component of the dark-operative protochlorophyllide reductase (DPOR) that uses Mg-ATP and reduced ferredoxin to reduce ring D of protochlorophyllide (Pchlide) to form chlorophyllide a (Chlide). This reaction is light-independent. The NB-protein (ChlN-ChlB) is the catalytic component of the complex. The polypeptide is Light-independent protochlorophyllide reductase subunit B (Prochlorococcus marinus (strain NATL2A)).